The following is a 338-amino-acid chain: Fusarubin cluster-specific transcription factor fsr6 (338 aa).

Residues 16 to 44 (CDACTTAKVRCSRTHPCERCEDNGQAKEC) constitute a DNA-binding region (zn(2)-C6 fungal-type).

Its subcellular location is the nucleus. Its function is as follows. Transcription factor that regulates the expression of the gene cluster that mediates the biosynthesis of fusarubins, highly pigmented naphthoquinones responsible for the coloration of the fruiting bodies. This is Fusarubin cluster-specific transcription factor fsr6 from Gibberella fujikuroi (strain CBS 195.34 / IMI 58289 / NRRL A-6831) (Bakanae and foot rot disease fungus).